The following is an 839-amino-acid chain: Protein translocase subunit SecA (839 aa).

ATP contacts are provided by residues Gln-85, 103-107 (GEGKT), and Asp-493. Positions 780 to 790 (QIHEQERERAS) are enriched in basic and acidic residues. A disordered region spans residues 780-839 (QIHEQERERASQRATTAAPQNIQSQQSANTDDLPKVERNEACPCGSGKKFKNCHGRKSFS). A compositionally biased stretch (polar residues) spans 791–809 (QRATTAAPQNIQSQQSANT). The Zn(2+) site is built by Cys-821, Cys-823, Cys-832, and His-833. The segment covering 827-839 (KKFKNCHGRKSFS) has biased composition (basic residues).

This sequence belongs to the SecA family. In terms of assembly, monomer and homodimer. Part of the essential Sec protein translocation apparatus which comprises SecA, SecYEG and auxiliary proteins SecDF. Other proteins may also be involved. Zn(2+) is required as a cofactor.

The protein resides in the cell membrane. It localises to the cytoplasm. It catalyses the reaction ATP + H2O + cellular proteinSide 1 = ADP + phosphate + cellular proteinSide 2.. Part of the Sec protein translocase complex. Interacts with the SecYEG preprotein conducting channel. Has a central role in coupling the hydrolysis of ATP to the transfer of proteins into and across the cell membrane, serving as an ATP-driven molecular motor driving the stepwise translocation of polypeptide chains across the membrane. This is Protein translocase subunit SecA from Streptococcus pyogenes serotype M3 (strain ATCC BAA-595 / MGAS315).